The sequence spans 308 residues: uncharacterized protein (308 aa).

A disordered region spans residues 19-43 (EPQASGAGPAQTPPPVTVPMTPPSK). A compositionally biased stretch (pro residues) spans 29-43 (QTPPPVTVPMTPPSK).

This is an uncharacterized protein from Deinococcus radiodurans (strain ATCC 13939 / DSM 20539 / JCM 16871 / CCUG 27074 / LMG 4051 / NBRC 15346 / NCIMB 9279 / VKM B-1422 / R1).